Consider the following 280-residue polypeptide: MLSKAHAKINLSLDVIGKRKDGYHLLKMLMQTIDLYDLIEIKKIKKDIIIDCDREYIPKDRRNLAYKAASLFLDRYNIDSGVRINITKNIPVAAGLAGGSTDAATVLKIMRDIFEPDISNEELKEIALDIGADVPFCIEGGTALCEGIGEKITSIKNFKNQILVLVKPNFGLSTKDVYNNLKVEKIYIHPNTTKLIQSIEEDNLESVARNMRNVLENVTLRKYKTLNSIKSNFIELGALGSMMSGSGPSVFGLFDDMLKAQICYDNMKEKYKEVFITRTI.

K8 is an active-site residue. Residue 91–101 (PVAAGLAGGST) participates in ATP binding. Residue D133 is part of the active site.

This sequence belongs to the GHMP kinase family. IspE subfamily.

The catalysed reaction is 4-CDP-2-C-methyl-D-erythritol + ATP = 4-CDP-2-C-methyl-D-erythritol 2-phosphate + ADP + H(+). The protein operates within isoprenoid biosynthesis; isopentenyl diphosphate biosynthesis via DXP pathway; isopentenyl diphosphate from 1-deoxy-D-xylulose 5-phosphate: step 3/6. Functionally, catalyzes the phosphorylation of the position 2 hydroxy group of 4-diphosphocytidyl-2C-methyl-D-erythritol. The sequence is that of 4-diphosphocytidyl-2-C-methyl-D-erythritol kinase from Clostridium botulinum (strain Okra / Type B1).